A 426-amino-acid polypeptide reads, in one-letter code: COP9 signalosome complex subunit 6 (426 aa).

Residues 14–155 (VLLHPLVIMQ…AGTTRKLPLF (142 aa)) enclose the MPN domain. Residues 320-426 (PVRFKSQHLG…NESDESSQAS (107 aa)) form a disordered region. A compositionally biased stretch (acidic residues) spans 334–347 (ADDDDYFDDEDLEN).

The protein belongs to the peptidase M67A family. CSN6 subfamily. As to quaternary structure, component of the CSN complex, probably composed of csn-1, csn-2, csn-3, csn-4, csn-5, csn-6 and csn-7. Within the complex it probably interacts directly with csn-2 and csn-4. Interacts with rbx-1.

It is found in the cytoplasm. Its subcellular location is the nucleus. Its function is as follows. Component of the COP9 signalosome complex (CSN), a complex involved in various cellular and developmental processes. The CSN complex is an essential regulator of the ubiquitin (Ubl) conjugation pathway by mediating the deneddylation of the cullin subunits of the SCF-type E3 ligase complexes, leading to decrease the Ubl ligase activity of SCF. The CSN complex plays an essential role in embryogenesis and oogenesis and is required to regulate microtubule stability in the early embryo. Mediates mei-3/katanin targeting for degradation at the meiosis to mitosis transition via deneddylation of cul-3. This is COP9 signalosome complex subunit 6 (csn-6) from Caenorhabditis elegans.